A 132-amino-acid polypeptide reads, in one-letter code: Small ribosomal subunit protein uS8 (132 aa).

Belongs to the universal ribosomal protein uS8 family. As to quaternary structure, part of the 30S ribosomal subunit. Contacts proteins S5 and S12.

In terms of biological role, one of the primary rRNA binding proteins, it binds directly to 16S rRNA central domain where it helps coordinate assembly of the platform of the 30S subunit. This chain is Small ribosomal subunit protein uS8, found in Rhodopseudomonas palustris (strain BisA53).